Reading from the N-terminus, the 281-residue chain is Putative integrase/recombinase y4rD (281 aa).

Positions 5 to 98 (LLLAPLLESY…AIRSFFHHVA (94 aa)) constitute a Core-binding (CB) domain. In terms of domain architecture, Tyr recombinase spans 122–281 (EVTHHLTKAE…TMSGTENASV (160 aa)). Catalysis depends on residues Arg-162, Lys-188, His-262, and Arg-265.

Belongs to the 'phage' integrase family.

In terms of biological role, seems to be non-functional. This is Putative integrase/recombinase y4rD from Sinorhizobium fredii (strain NBRC 101917 / NGR234).